Consider the following 590-residue polypeptide: MSATHIENRDDSFLENKGIDHIGRPENNNGSQEPPSPSGFGGHLIDENLVRVEGEDKVTWYLCFLISASAIAGFLFGYDTGVVGVALPLVGTDLGGSALNSSQQEIITAGTTIGAIFGSAILGGWGDRLGRKGAILVSDVFFTIGAVIIASSYSVPQIIVGRIILGIGVGGAAVIAPLFITETAPTAVRGRCIGVNAFFIPFGQVVSDAIGAGVQNMHNGWRLLFALGAVPSLLQLLLFHYLPESPRILILKGDTEGARTVFQRIYPTATSEMIEYKFRVAHEYIAATTALQSGTTFWERVKKVLKTGSYRRSIIAVSALQAAGQLTGFNTLLYYAGTLFGLLGLSNPALGGLIPAGTNAVFVLIGMSLVDKVGRRGLLLIGVPIMLLGHVWNIVSFYYMCKPTGGFLDTSYSYDTTDVGIVIGGIVFFVVGYGLTYSHLVWYQAEYLTLEVRSMGSGIATTVCWIANLVVSVSYLSELETMTPSGTYGFYFGISVIGFVFLVFCLPETKQLSIDETSLLFEDDWGVKRSAQMRKERRETRKRLQDAELGEAATAHLEARQQKSTSVSPAELSKFMAGLKGGKRTPSASV.

The Cytoplasmic portion of the chain corresponds to 1-57 (MSATHIENRDDSFLENKGIDHIGRPENNNGSQEPPSPSGFGGHLIDENLVRVEGEDK). The span at 15-24 (ENKGIDHIGR) shows a compositional bias: basic and acidic residues. The interval 15–40 (ENKGIDHIGRPENNNGSQEPPSPSGF) is disordered. A helical membrane pass occupies residues 58 to 78 (VTWYLCFLISASAIAGFLFGY). Residues 79–105 (DTGVVGVALPLVGTDLGGSALNSSQQE) are Extracellular-facing. A glycan (N-linked (GlcNAc...) asparagine) is linked at Asn100. Residues 106-126 (IITAGTTIGAIFGSAILGGWG) form a helical membrane-spanning segment. Residues 127–132 (DRLGRK) are Cytoplasmic-facing. Residues 133 to 153 (GAILVSDVFFTIGAVIIASSY) form a helical membrane-spanning segment. Topologically, residues 154 to 157 (SVPQ) are extracellular. The helical transmembrane segment at 158-178 (IIVGRIILGIGVGGAAVIAPL) threads the bilayer. Topologically, residues 179-192 (FITETAPTAVRGRC) are cytoplasmic. Residues 193-213 (IGVNAFFIPFGQVVSDAIGAG) form a helical membrane-spanning segment. The Extracellular portion of the chain corresponds to 214–222 (VQNMHNGWR). The chain crosses the membrane as a helical span at residues 223 to 243 (LLFALGAVPSLLQLLLFHYLP). Residues 244–325 (ESPRILILKG…AVSALQAAGQ (82 aa)) are Cytoplasmic-facing. The helical transmembrane segment at 326-346 (LTGFNTLLYYAGTLFGLLGLS) threads the bilayer. The Extracellular segment spans residues 347-349 (NPA). The helical transmembrane segment at 350 to 370 (LGGLIPAGTNAVFVLIGMSLV) threads the bilayer. At 371–376 (DKVGRR) the chain is on the cytoplasmic side. Residues 377-397 (GLLLIGVPIMLLGHVWNIVSF) form a helical membrane-spanning segment. Residues 398–420 (YYMCKPTGGFLDTSYSYDTTDVG) are Extracellular-facing. A helical membrane pass occupies residues 421-441 (IVIGGIVFFVVGYGLTYSHLV). Over 442 to 455 (WYQAEYLTLEVRSM) the chain is Cytoplasmic. A helical membrane pass occupies residues 456–476 (GSGIATTVCWIANLVVSVSYL). The Extracellular portion of the chain corresponds to 477-485 (SELETMTPS). The chain crosses the membrane as a helical span at residues 486-506 (GTYGFYFGISVIGFVFLVFCL). The Cytoplasmic segment spans residues 507 to 590 (PETKQLSIDE…GGKRTPSASV (84 aa)).

The protein belongs to the major facilitator superfamily. Sugar transporter (TC 2.A.1.1) family.

It is found in the cell membrane. It carries out the reaction myo-inositol(out) + H(+)(out) = myo-inositol(in) + H(+)(in). In terms of biological role, transporter for myo-inositol. The chain is Myo-inositol transporter 3A (ITR3A) from Cryptococcus neoformans var. grubii serotype A (strain H99 / ATCC 208821 / CBS 10515 / FGSC 9487) (Filobasidiella neoformans var. grubii).